Consider the following 348-residue polypeptide: Protein RecA (348 aa).

66 to 73 contributes to the ATP binding site; it reads GPESSGKT.

It belongs to the RecA family.

Its subcellular location is the cytoplasm. Can catalyze the hydrolysis of ATP in the presence of single-stranded DNA, the ATP-dependent uptake of single-stranded DNA by duplex DNA, and the ATP-dependent hybridization of homologous single-stranded DNAs. It interacts with LexA causing its activation and leading to its autocatalytic cleavage. In Legionella pneumophila, this protein is Protein RecA.